The primary structure comprises 297 residues: Phosphoribosylaminoimidazole-succinocarboxamide synthase (297 aa).

Belongs to the SAICAR synthetase family.

The catalysed reaction is 5-amino-1-(5-phospho-D-ribosyl)imidazole-4-carboxylate + L-aspartate + ATP = (2S)-2-[5-amino-1-(5-phospho-beta-D-ribosyl)imidazole-4-carboxamido]succinate + ADP + phosphate + 2 H(+). The protein operates within purine metabolism; IMP biosynthesis via de novo pathway; 5-amino-1-(5-phospho-D-ribosyl)imidazole-4-carboxamide from 5-amino-1-(5-phospho-D-ribosyl)imidazole-4-carboxylate: step 1/2. The sequence is that of Phosphoribosylaminoimidazole-succinocarboxamide synthase from Saccharopolyspora erythraea (strain ATCC 11635 / DSM 40517 / JCM 4748 / NBRC 13426 / NCIMB 8594 / NRRL 2338).